Here is a 218-residue protein sequence, read N- to C-terminus: Transmembrane gamma-carboxyglutamic acid protein 1 (218 aa).

The propeptide occupies 1–20 (MGRVFLTGEKANSVLKRYPR). The region spanning 20 to 66 (RANGFFEEIRQGNIERECKEEFCTFEEAREAFENNEKTKEFWSTYTK) is the Gla domain. Over 21–80 (ANGFFEEIRQGNIERECKEEFCTFEEAREAFENNEKTKEFWSTYTKAQQGESNRGSDWFQ) the chain is Extracellular. A disulfide bond links Cys37 and Cys42. A helical membrane pass occupies residues 81 to 101 (FYLTFPLIFGLFIILLVIFLI). At 102–218 (WRCFLRNKTR…PMVPVVTTIK (117 aa)) the chain is on the cytoplasmic side. The disordered stretch occupies residues 161–195 (TRLSNCDPPPTYEEATGQVNLQRSETEPHLDPPPE).

In terms of processing, gla residues are produced after subsequent post-translational modifications of glutamate by a vitamin K-dependent gamma-carboxylase.

Its subcellular location is the membrane. The polypeptide is Transmembrane gamma-carboxyglutamic acid protein 1 (PRRG1) (Pongo abelii (Sumatran orangutan)).